The chain runs to 312 residues: Lipid-translocating exporter-like protein RTA1 (312 aa).

The disordered stretch occupies residues 1–21; that stretch reads MSPESKKITAHGSTSMPLSRT. A compositionally biased stretch (polar residues) spans 11 to 21; it reads HGSTSMPLSRT. A run of 6 helical transmembrane segments spans residues 29–49, 61–81, 103–123, 142–162, 183–203, and 223–243; these read IPLT…FFLA, LSTM…YFIC, FITF…LLAG, AMIT…SFHV, FMMV…RSAY, and SLML…ILPI. 2 N-linked (GlcNAc...) asparagine glycosylation sites follow: Asn258 and Asn304.

Belongs to the lipid-translocating exporter (LTE) (TC 9.A.26.1) family.

The protein localises to the membrane. It functions in the pathway siderophore biosynthesis. Functionally, lipid-translocating exporter-like protein; part of the gene cluster that mediates the biosynthesis of hydroxamate-containing siderophores that play a critical role in virulence via intracellular iron acquisition during macrophage infection. The chain is Lipid-translocating exporter-like protein RTA1 from Ajellomyces capsulatus (Darling's disease fungus).